Reading from the N-terminus, the 444-residue chain is Trigger factor (444 aa).

The 86-residue stretch at 185–270 folds into the PPIase FKBP-type domain; the sequence is GDKLIIDFEG…VNEIQIAKDF (86 aa).

Belongs to the FKBP-type PPIase family. Tig subfamily.

It localises to the cytoplasm. The enzyme catalyses [protein]-peptidylproline (omega=180) = [protein]-peptidylproline (omega=0). Functionally, involved in protein export. Acts as a chaperone by maintaining the newly synthesized protein in an open conformation. Functions as a peptidyl-prolyl cis-trans isomerase. In Wolbachia pipientis wMel, this protein is Trigger factor.